We begin with the raw amino-acid sequence, 140 residues long: Hemoglobin subunit alpha (140 aa).

In terms of domain architecture, Globin spans 1–140 (LSAADKGHVK…VSTVLTSKYR (140 aa)). Serine 2 bears the Phosphoserine mark. Lysine 6 and lysine 10 each carry N6-succinyllysine. Residue lysine 15 is modified to N6-acetyllysine; alternate. Lysine 15 is subject to N6-succinyllysine; alternate. Phosphotyrosine is present on tyrosine 23. A Phosphoserine modification is found at serine 34. Lysine 39 carries the post-translational modification N6-succinyllysine. Residue serine 48 is modified to Phosphoserine. Histidine 57 lines the O2 pocket. Histidine 86 lines the heme b pocket. Serine 101 carries the post-translational modification Phosphoserine. Threonine 107 carries the phosphothreonine modification. A Phosphoserine modification is found at serine 123. 2 positions are modified to phosphothreonine: threonine 133 and threonine 136. Residue serine 137 is modified to Phosphoserine.

The protein belongs to the globin family. Heterotetramer of two alpha chains and two beta chains. Red blood cells.

Involved in oxygen transport from the lung to the various peripheral tissues. In terms of biological role, hemopressin acts as an antagonist peptide of the cannabinoid receptor CNR1. Hemopressin-binding efficiently blocks cannabinoid receptor CNR1 and subsequent signaling. This Tragelaphus strepsiceros (Greater kudu) protein is Hemoglobin subunit alpha (HBA).